The chain runs to 347 residues: Gas vesicle ATPase GvpN (347 aa).

The segment at 1-50 (MTNSSRERKVRGSQIRTSRREKQDKNARNRTEKELTRLENHQTHRTKNGT) is disordered. A compositionally biased stretch (basic and acidic residues) spans 18–42 (SRREKQDKNARNRTEKELTRLENHQ). Position 91 to 98 (91 to 98 (GPTGCGKT)) interacts with ATP.

The protein belongs to the CbbQ/NirQ/NorQ/GpvN family. Forms homodimers, a GvpN-GvpO heterodimer, interacts with GvpC and GvpL, might interact with GvpA.

It is found in the gas vesicle. It localises to the cytoplasm. It catalyses the reaction ATP + H2O = ADP + phosphate + H(+). An ATPase that functions in gas vesicle formation. A minor component of the gas vesicle, also found in soluble extracts. Gas vesicles are hollow, gas filled proteinaceous nanostructures found in some microorganisms. They allow positioning of halobacteria at the optimal depth for growth in the poorly aerated, shallow brine pools of their habitat. In terms of biological role, expression of a 9.5 kb mc-vac DNA fragment containing 2 divergently transcribed regions (gvpD-gvpE-gvpF-gvpG-gvpH-gvpI-gvpJ-gvpK-gvpL-gvpM and gvpA-gvpC-gvpN-gvpO) allows H.volcanii to produce gas vesicles. In Haloferax mediterranei (strain ATCC 33500 / DSM 1411 / JCM 8866 / NBRC 14739 / NCIMB 2177 / R-4) (Halobacterium mediterranei), this protein is Gas vesicle ATPase GvpN.